We begin with the raw amino-acid sequence, 239 residues long: ATP-dependent dethiobiotin synthetase BioD (239 aa).

Residue 15-20 (EIGKTF) coordinates ATP. Thr-19 contacts Mg(2+). Residue Lys-40 is part of the active site. ATP-binding positions include Asp-57, 118-121 (EGVG), and 178-179 (NH). Mg(2+) contacts are provided by Asp-57 and Glu-118.

Belongs to the dethiobiotin synthetase family. As to quaternary structure, homodimer. Mg(2+) is required as a cofactor.

The protein resides in the cytoplasm. It catalyses the reaction (7R,8S)-7,8-diammoniononanoate + CO2 + ATP = (4R,5S)-dethiobiotin + ADP + phosphate + 3 H(+). Its pathway is cofactor biosynthesis; biotin biosynthesis; biotin from 7,8-diaminononanoate: step 1/2. Its function is as follows. Catalyzes a mechanistically unusual reaction, the ATP-dependent insertion of CO2 between the N7 and N8 nitrogen atoms of 7,8-diaminopelargonic acid (DAPA, also called 7,8-diammoniononanoate) to form a ureido ring. The polypeptide is ATP-dependent dethiobiotin synthetase BioD (Burkholderia multivorans (strain ATCC 17616 / 249)).